We begin with the raw amino-acid sequence, 534 residues long: ATP synthase subunit beta 2 (534 aa).

Over residues 1–10 (MADPQATNGT) the composition is skewed to polar residues. A disordered region spans residues 1–30 (MADPQATNGTGAACAERDASDVGDVSDVGD). 185–192 (GGAGVGKT) contacts ATP. Basic and acidic residues predominate over residues 494–505 (AAAREADARREA). Positions 494–534 (AAAREADARREAAAAASGAGPGTTSDPASGSAEPQGARHGR) are disordered.

Belongs to the ATPase alpha/beta chains family. In terms of assembly, F-type ATPases have 2 components, CF(1) - the catalytic core - and CF(0) - the membrane proton channel. CF(1) has five subunits: alpha(3), beta(3), gamma(1), delta(1), epsilon(1). CF(0) has three main subunits: a(1), b(2) and c(9-12). The alpha and beta chains form an alternating ring which encloses part of the gamma chain. CF(1) is attached to CF(0) by a central stalk formed by the gamma and epsilon chains, while a peripheral stalk is formed by the delta and b chains.

It localises to the cell inner membrane. It catalyses the reaction ATP + H2O + 4 H(+)(in) = ADP + phosphate + 5 H(+)(out). Functionally, produces ATP from ADP in the presence of a proton gradient across the membrane. The catalytic sites are hosted primarily by the beta subunits. The chain is ATP synthase subunit beta 2 from Burkholderia pseudomallei (strain 668).